Here is a 282-residue protein sequence, read N- to C-terminus: Acetyl-coenzyme A carboxylase carboxyl transferase subunit beta (282 aa).

A CoA carboxyltransferase N-terminal domain is found at 28 to 282 (IMTKCPSCRT…TKILDIHHVS (255 aa)). 4 residues coordinate Zn(2+): cysteine 32, cysteine 35, cysteine 51, and cysteine 54. The C4-type zinc-finger motif lies at 32 to 54 (CPSCRTIMYTKELKKNLYVCDSC).

It belongs to the AccD/PCCB family. As to quaternary structure, acetyl-CoA carboxylase is a heterohexamer composed of biotin carboxyl carrier protein (AccB), biotin carboxylase (AccC) and two subunits each of ACCase subunit alpha (AccA) and ACCase subunit beta (AccD). Zn(2+) is required as a cofactor.

It is found in the cytoplasm. It catalyses the reaction N(6)-carboxybiotinyl-L-lysyl-[protein] + acetyl-CoA = N(6)-biotinyl-L-lysyl-[protein] + malonyl-CoA. It functions in the pathway lipid metabolism; malonyl-CoA biosynthesis; malonyl-CoA from acetyl-CoA: step 1/1. In terms of biological role, component of the acetyl coenzyme A carboxylase (ACC) complex. Biotin carboxylase (BC) catalyzes the carboxylation of biotin on its carrier protein (BCCP) and then the CO(2) group is transferred by the transcarboxylase to acetyl-CoA to form malonyl-CoA. The chain is Acetyl-coenzyme A carboxylase carboxyl transferase subunit beta from Halalkalibacterium halodurans (strain ATCC BAA-125 / DSM 18197 / FERM 7344 / JCM 9153 / C-125) (Bacillus halodurans).